A 143-amino-acid chain; its full sequence is Large ribosomal subunit protein uL15 (143 aa).

Positions 1–59 are disordered; sequence MELNGIKPSLGAKHAKRRVGRGIGSGLGKTAGRGHKGQKSRAGGYHKVGFEGGQMPMQR. Residues 21–31 are compositionally biased toward gly residues; it reads RGIGSGLGKTA.

The protein belongs to the universal ribosomal protein uL15 family. In terms of assembly, part of the 50S ribosomal subunit.

Binds to the 23S rRNA. This is Large ribosomal subunit protein uL15 from Polaromonas sp. (strain JS666 / ATCC BAA-500).